Reading from the N-terminus, the 353-residue chain is Small ribosomal subunit biogenesis GTPase RsgA (353 aa).

Over residues 1–17 (MSKNKLSKGQQRRVNAN) the composition is skewed to polar residues. The segment at 1–25 (MSKNKLSKGQQRRVNANHQRRLKTT) is disordered. The 171-residue stretch at 104–274 (ASVLTRPDFY…VIDSPGVREF (171 aa)) folds into the CP-type G domain. Residues 160-163 (NKID) and 214-222 (GQSGVGKSS) contribute to the GTP site. Zn(2+) is bound by residues C298, C303, H305, and C311.

This sequence belongs to the TRAFAC class YlqF/YawG GTPase family. RsgA subfamily. Monomer. Associates with 30S ribosomal subunit, binds 16S rRNA. Requires Zn(2+) as cofactor.

It localises to the cytoplasm. One of several proteins that assist in the late maturation steps of the functional core of the 30S ribosomal subunit. Helps release RbfA from mature subunits. May play a role in the assembly of ribosomal proteins into the subunit. Circularly permuted GTPase that catalyzes slow GTP hydrolysis, GTPase activity is stimulated by the 30S ribosomal subunit. In Klebsiella pneumoniae (strain 342), this protein is Small ribosomal subunit biogenesis GTPase RsgA.